We begin with the raw amino-acid sequence, 65 residues long: Large ribosomal subunit protein bL35 (65 aa).

Residues 1 to 23 (MPKMKSNRGAAKRFKRTGSGKFK) are disordered. Positions 10–23 (AAKRFKRTGSGKFK) are enriched in basic residues.

The protein belongs to the bacterial ribosomal protein bL35 family.

In Acidithiobacillus ferrooxidans (strain ATCC 53993 / BNL-5-31) (Leptospirillum ferrooxidans (ATCC 53993)), this protein is Large ribosomal subunit protein bL35.